A 347-amino-acid polypeptide reads, in one-letter code: Ryncolin-3 (347 aa).

A signal peptide spans 1–19 (MKPWAAFHLIFLVASSVEG). The region spanning 57 to 114 (GIPGVPGINGSEGLKGDPGPQGLPGETGFDGIPGVAGPKGDKGDQGDKGDKGDKGDKG) is the Collagen-like domain. A disordered region spans residues 62-115 (PGINGSEGLKGDPGPQGLPGETGFDGIPGVAGPKGDKGDQGDKGDKGDKGDKGD). Residues 95–115 (KGDKGDQGDKGDKGDKGDKGD) show a composition bias toward basic and acidic residues. The Fibrinogen C-terminal domain occupies 121–341 (DCPPTDVEVR…YADMKIRPQQ (221 aa)). 2 disulfides stabilise this stretch: Cys-132–Cys-160 and Cys-284–Cys-297.

It belongs to the ficolin lectin family. Veficolin subfamily. Post-translationally, hydroxylated. Expressed by the venom duct.

It localises to the secreted. In terms of biological role, initiates complement activation and/or interferes in platelet aggregation and/or blood coagulation. The chain is Ryncolin-3 from Cerberus rynchops (Dog-faced water snake).